Reading from the N-terminus, the 290-residue chain is Secreted chorismate mutase (290 aa).

Positions 1-21 (MKLSVSIFVLLAVSAFGGGSA) are cleaved as a signal peptide. A KWL1-binding extensive loop region (ELR) region spans residues 117–140 (VVLSRDTVLDKPVVGKGIFPIGRR). N-linked (GlcNAc...) asparagine glycans are attached at residues N159 and N208.

As to quaternary structure, homodimer. Forms a heterodimer with the host cytosolic chorismate mutase CM2. Interacts with the host kiwellin KWL1 which acts as a defense protein that protects maize from infection.

Its subcellular location is the secreted. It is found in the host cytoplasm. It localises to the host cytosol. The enzyme catalyses chorismate = prephenate. With respect to regulation, contrary to classical chorismate mutases, CMU1 is not subject to allosteric regulation by tryptophan and tyrosine. Activity is decreased in a non-competitive and allosteric manner by the binding of the host defense kiwellin KWL1 which probably blocks substrate access to the active site of CMU1. Its function is as follows. Secreted chorismate mutase that is one component of a cocktail of effectors shaping the host metabolome and acting as virulence factors. The enzyme is taken up by plant cells, can spread to neighboring cells where it affects the biosynthesis of the plant immune signal salicylic acid by channelling chorismate into the phenylpropanoid pathway. Interferes with the activity of host cytosolic chorismate mutase CM2 through heterodimerization. This is Secreted chorismate mutase (CMU1) from Mycosarcoma maydis (Corn smut fungus).